Here is a 281-residue protein sequence, read N- to C-terminus: Protein synthesis inhibitor I (281 aa).

A2 is modified (N-acetylalanine). E175 is a catalytic residue.

Belongs to the ribosome-inactivating protein family. Type 1 RIP subfamily.

The protein localises to the cytoplasm. The enzyme catalyses Endohydrolysis of the N-glycosidic bond at one specific adenosine on the 28S rRNA.. Its function is as follows. Inhibits the elongation phase of protein synthesis. It inactivates fungal ribosomes even more effectively than mammalian ribosomes and is thought to function as a constitutive antifungal agent in plants. The polypeptide is Protein synthesis inhibitor I (RIP30) (Hordeum vulgare (Barley)).